Consider the following 234-residue polypeptide: Phosphoribosylaminoimidazole-succinocarboxamide synthase (234 aa).

Belongs to the SAICAR synthetase family.

The catalysed reaction is 5-amino-1-(5-phospho-D-ribosyl)imidazole-4-carboxylate + L-aspartate + ATP = (2S)-2-[5-amino-1-(5-phospho-beta-D-ribosyl)imidazole-4-carboxamido]succinate + ADP + phosphate + 2 H(+). It participates in purine metabolism; IMP biosynthesis via de novo pathway; 5-amino-1-(5-phospho-D-ribosyl)imidazole-4-carboxamide from 5-amino-1-(5-phospho-D-ribosyl)imidazole-4-carboxylate: step 1/2. This chain is Phosphoribosylaminoimidazole-succinocarboxamide synthase, found in Streptococcus pyogenes serotype M18 (strain MGAS8232).